We begin with the raw amino-acid sequence, 199 residues long: Imidazoleglycerol-phosphate dehydratase (199 aa).

The protein belongs to the imidazoleglycerol-phosphate dehydratase family.

Its subcellular location is the cytoplasm. The enzyme catalyses D-erythro-1-(imidazol-4-yl)glycerol 3-phosphate = 3-(imidazol-4-yl)-2-oxopropyl phosphate + H2O. The protein operates within amino-acid biosynthesis; L-histidine biosynthesis; L-histidine from 5-phospho-alpha-D-ribose 1-diphosphate: step 6/9. This is Imidazoleglycerol-phosphate dehydratase from Mesorhizobium japonicum (strain LMG 29417 / CECT 9101 / MAFF 303099) (Mesorhizobium loti (strain MAFF 303099)).